The following is a 147-amino-acid chain: Zinc finger HIT domain-containing protein 3 (147 aa).

Residues cysteine 3, cysteine 6, cysteine 14, cysteine 17, cysteine 22, cysteine 26, histidine 30, and cysteine 34 each contribute to the Zn(2+) site. An HIT-type zinc finger spans residues 3 to 34; that stretch reads CVICLEKPKYRCPACRVPYCSVACFRKHKEQC. Positions 45-67 are disordered; that stretch reads IRSALPTKTXKPVENKDDDDSIA. The residue at position 72 (serine 72) is a Phosphoserine.

Thyroid receptor interacting proteins (TRIPs) specifically interact with the ligand binding domain of the thyroid receptor (TR). Requires the presence of thyroid hormone for its interaction. Interacts with NUFIP1. Interacts (via HIT-type zinc finger) with the RUVBL1/RUVBL2 complex in the presence of ADP.

The protein resides in the cytoplasm. Its subcellular location is the nucleus. The chain is Zinc finger HIT domain-containing protein 3 (ZNHIT3) from Macaca mulatta (Rhesus macaque).